A 213-amino-acid polypeptide reads, in one-letter code: Orotate phosphoribosyltransferase (213 aa).

Lys26 contributes to the 5-phospho-alpha-D-ribose 1-diphosphate binding site. 34 to 35 contacts orotate; sequence FF. Residues 72 to 73, Arg98, Lys99, Lys102, His104, and 123 to 131 contribute to the 5-phospho-alpha-D-ribose 1-diphosphate site; these read YK and DDVISAGTS. Orotate-binding residues include Ser127 and Arg155.

Belongs to the purine/pyrimidine phosphoribosyltransferase family. PyrE subfamily. As to quaternary structure, homodimer. The cofactor is Mg(2+).

The catalysed reaction is orotidine 5'-phosphate + diphosphate = orotate + 5-phospho-alpha-D-ribose 1-diphosphate. Its pathway is pyrimidine metabolism; UMP biosynthesis via de novo pathway; UMP from orotate: step 1/2. Its function is as follows. Catalyzes the transfer of a ribosyl phosphate group from 5-phosphoribose 1-diphosphate to orotate, leading to the formation of orotidine monophosphate (OMP). This chain is Orotate phosphoribosyltransferase, found in Neisseria meningitidis serogroup A / serotype 4A (strain DSM 15465 / Z2491).